Reading from the N-terminus, the 367-residue chain is Phosphoribosylaminoimidazole-succinocarboxamide synthase (367 aa).

It belongs to the SAICAR synthetase family.

It carries out the reaction 5-amino-1-(5-phospho-D-ribosyl)imidazole-4-carboxylate + L-aspartate + ATP = (2S)-2-[5-amino-1-(5-phospho-beta-D-ribosyl)imidazole-4-carboxamido]succinate + ADP + phosphate + 2 H(+). It functions in the pathway purine metabolism; IMP biosynthesis via de novo pathway; 5-amino-1-(5-phospho-D-ribosyl)imidazole-4-carboxamide from 5-amino-1-(5-phospho-D-ribosyl)imidazole-4-carboxylate: step 1/2. This chain is Phosphoribosylaminoimidazole-succinocarboxamide synthase, found in Shewanella baltica (strain OS223).